The primary structure comprises 254 residues: Large ribosomal subunit protein uL15m (254 aa).

Residues 1 to 78 (MFNILSRVCR…GSGQRRGRRI (78 aa)) constitute a mitochondrion transit peptide. The disordered stretch occupies residues 44 to 104 (NYQSKKRVGR…KVGHSTGHLK (61 aa)). The segment covering 64-79 (GRGHKGSGQRRGRRIK) has biased composition (basic residues).

The protein belongs to the universal ribosomal protein uL15 family. Component of the mitochondrial large ribosomal subunit (mt-LSU). Mature yeast 74S mitochondrial ribosomes consist of a small (37S) and a large (54S) subunit. The 37S small subunit contains a 15S ribosomal RNA (15S mt-rRNA) and at least 32 different proteins. The 54S large subunit contains a 21S rRNA (21S mt-rRNA) and at least 45 different proteins.

It localises to the mitochondrion. Functionally, component of the mitochondrial ribosome (mitoribosome), a dedicated translation machinery responsible for the synthesis of mitochondrial genome-encoded proteins, including at least some of the essential transmembrane subunits of the mitochondrial respiratory chain. The mitoribosomes are attached to the mitochondrial inner membrane and translation products are cotranslationally integrated into the membrane. This chain is Large ribosomal subunit protein uL15m (mrpl10), found in Schizosaccharomyces pombe (strain 972 / ATCC 24843) (Fission yeast).